Here is a 282-residue protein sequence, read N- to C-terminus: Halorhodopsin (282 aa).

Residues 1–29 (MMETAADALASGTVPLEMTQTQIFEAIQG) are Extracellular-facing. The chain crosses the membrane as a helical span at residues 30 to 55 (DTLLASSLWINIALAGLSILLFVYMG). At 56–61 (RNLEDP) the chain is on the cytoplasmic side. The helical transmembrane segment at 62–85 (RAQLIFVATLMVPLVSISSYTGLV) threads the bilayer. Residues 86-109 (SGLTVSFLEMPAGHALAGQEVLTP) are Extracellular-facing. Residues 110–131 (WGRYLTWALSTPMILVALGLLA) form a helical membrane-spanning segment. The Cytoplasmic portion of the chain corresponds to 132–134 (GSN). A helical transmembrane segment spans residues 135 to 158 (ATKLFTAVTADIGMCVTGLAAALT). The Extracellular portion of the chain corresponds to 159 to 161 (TSS). The helical transmembrane segment at 162–184 (YLLRWVWYVISCAFFVVVLYVLL) threads the bilayer. The Cytoplasmic portion of the chain corresponds to 185 to 196 (AEWAEDAEVAGT). The chain crosses the membrane as a helical span at residues 197 to 220 (AEIFNTLKLLTVVLWLGYPIFWAL). Residues 221 to 229 (GAEGLAVLD) lie on the Extracellular side of the membrane. A helical transmembrane segment spans residues 230–258 (VAVTSWAYSGMDIVAKYLFAFLLLRWVVD). Lysine 245 bears the N6-(retinylidene)lysine mark. At 259–282 (NERTVAGMAAGLGAPLARCAPADD) the chain is on the cytoplasmic side.

Belongs to the archaeal/bacterial/fungal opsin family.

It is found in the cell membrane. Its function is as follows. Light-driven chloride pump. This Halorubrum sodomense protein is Halorhodopsin (hop).